A 449-amino-acid polypeptide reads, in one-letter code: PC-esterase domain-containing protein 1A (449 aa).

The protein belongs to the PC-esterase family.

The sequence is that of PC-esterase domain-containing protein 1A (Pced1a) from Mus musculus (Mouse).